The following is a 330-amino-acid chain: MAQPSARVLQSGMRLPPMPTIRELVKLYRLQARKQLSQNFLMDERLTDKIVKSAGRIDPRDLVLEVGPGPGGITRSILRRHPQRLLLVEKDPRFGETLQLLKECASPLNIQFDIHYDDILRFNIEQHIPDTSQRIHLIGNLPFAISTRLLINWLDDLAARRGAFRRIDTCMTLTFQQEVAERICAPVGGEQRCRLSVMSQVWTEPVMKFTIPGKAFVPKPQVDVGVVKLIPLKRPKTQLPFHLVERVVRHIFSMRQKYCRRGYGTLLPPEDREEVAEKLFQRAEVQDTLRPFELTVEQCLRLAEVYSEHLVTRPEVAAYDYRAPKNVEVL.

The transit peptide at 1–84 (MAQPSARVLQ…RSILRRHPQR (84 aa)) directs the protein to the mitochondrion. S-adenosyl-L-methionine contacts are provided by residues 38–41 (QNFL), N39, L41, G67, E89, D118, and N140.

This sequence belongs to the class I-like SAM-binding methyltransferase superfamily. rRNA adenine N(6)-methyltransferase family. KsgA subfamily.

The protein localises to the mitochondrion. In terms of biological role, probable S-adenosyl-L-methionine-dependent methyltransferase which specifically dimethylates mitochondrial 12S rRNA at the conserved stem loop. In contrast to mtTFB2, it does not have a critical role in either transcription or regulation of the copy number of mitochondrial DNA. In Drosophila melanogaster (Fruit fly), this protein is Dimethyladenosine transferase 1, mitochondrial (mtTFB1).